Here is a 129-residue protein sequence, read N- to C-terminus: Small ribosomal subunit protein uS11 (129 aa).

It belongs to the universal ribosomal protein uS11 family. In terms of assembly, part of the 30S ribosomal subunit. Interacts with proteins S7 and S18. Binds to IF-3.

Located on the platform of the 30S subunit, it bridges several disparate RNA helices of the 16S rRNA. Forms part of the Shine-Dalgarno cleft in the 70S ribosome. The protein is Small ribosomal subunit protein uS11 of Desulfitobacterium hafniense (strain DSM 10664 / DCB-2).